Consider the following 425-residue polypeptide: Serine--tRNA ligase (425 aa).

The tract at residues 108-134 (YPNLPSEACPDGRSEDDNKEVRRWGDP) is disordered. The segment covering 117–134 (PDGRSEDDNKEVRRWGDP) has biased composition (basic and acidic residues). Residue 233 to 235 (TAE) participates in L-serine binding. 264-266 (RRE) contacts ATP. Glu-287 provides a ligand contact to L-serine. Residue 351–354 (EISS) coordinates ATP. Ser-385 is a binding site for L-serine.

The protein belongs to the class-II aminoacyl-tRNA synthetase family. Type-1 seryl-tRNA synthetase subfamily. Homodimer. The tRNA molecule binds across the dimer.

It is found in the cytoplasm. The catalysed reaction is tRNA(Ser) + L-serine + ATP = L-seryl-tRNA(Ser) + AMP + diphosphate + H(+). It carries out the reaction tRNA(Sec) + L-serine + ATP = L-seryl-tRNA(Sec) + AMP + diphosphate + H(+). Its pathway is aminoacyl-tRNA biosynthesis; selenocysteinyl-tRNA(Sec) biosynthesis; L-seryl-tRNA(Sec) from L-serine and tRNA(Sec): step 1/1. Functionally, catalyzes the attachment of serine to tRNA(Ser). Is also able to aminoacylate tRNA(Sec) with serine, to form the misacylated tRNA L-seryl-tRNA(Sec), which will be further converted into selenocysteinyl-tRNA(Sec). The chain is Serine--tRNA ligase from Synechococcus sp. (strain CC9311).